A 164-amino-acid chain; its full sequence is Peptide deformylase-like (164 aa).

Glutamate 134 is a catalytic residue.

This sequence belongs to the polypeptide deformylase family.

The polypeptide is Peptide deformylase-like (Brucella melitensis biotype 1 (strain ATCC 23456 / CCUG 17765 / NCTC 10094 / 16M)).